The primary structure comprises 211 residues: Ribonuclease HII (211 aa).

The region spanning 21 to 211 (SSIAGLDEAG…APLKSMFDVI (191 aa)) is the RNase H type-2 domain. Residues Asp-27, Glu-28, and Asp-122 each coordinate a divalent metal cation.

The protein belongs to the RNase HII family. Requires Mn(2+) as cofactor. It depends on Mg(2+) as a cofactor.

Its subcellular location is the cytoplasm. The enzyme catalyses Endonucleolytic cleavage to 5'-phosphomonoester.. Endonuclease that specifically degrades the RNA of RNA-DNA hybrids. This Dehalococcoides mccartyi (strain ATCC BAA-2266 / KCTC 15142 / 195) (Dehalococcoides ethenogenes (strain 195)) protein is Ribonuclease HII.